Here is a 428-residue protein sequence, read N- to C-terminus: Tyrosine--tRNA ligase (428 aa).

Y41 contributes to the L-tyrosine binding site. Residues 46 to 55 carry the 'HIGH' region motif; that stretch reads PTADSLHLGH. L-tyrosine is bound by residues Y179 and Q183. The short motif at 239-243 is the 'KMSKS' region element; the sequence is KFGKT. K242 lines the ATP pocket. One can recognise an S4 RNA-binding domain in the interval 361 to 418; it reads ADLMQALVDSELQPSRGQARKTIASNAITINGEKQSDPEYTFSDSDRLFGRYTLLRRG.

The protein belongs to the class-I aminoacyl-tRNA synthetase family. TyrS type 1 subfamily. As to quaternary structure, homodimer.

The protein resides in the cytoplasm. The enzyme catalyses tRNA(Tyr) + L-tyrosine + ATP = L-tyrosyl-tRNA(Tyr) + AMP + diphosphate + H(+). Its function is as follows. Catalyzes the attachment of tyrosine to tRNA(Tyr) in a two-step reaction: tyrosine is first activated by ATP to form Tyr-AMP and then transferred to the acceptor end of tRNA(Tyr). The chain is Tyrosine--tRNA ligase from Cronobacter sakazakii (strain ATCC BAA-894) (Enterobacter sakazakii).